The following is a 184-amino-acid chain: Adenine phosphoribosyltransferase (184 aa).

The protein belongs to the purine/pyrimidine phosphoribosyltransferase family. In terms of assembly, homodimer.

The protein resides in the cytoplasm. The catalysed reaction is AMP + diphosphate = 5-phospho-alpha-D-ribose 1-diphosphate + adenine. It functions in the pathway purine metabolism; AMP biosynthesis via salvage pathway; AMP from adenine: step 1/1. Catalyzes a salvage reaction resulting in the formation of AMP, that is energically less costly than de novo synthesis. In Paracidovorax citrulli (strain AAC00-1) (Acidovorax citrulli), this protein is Adenine phosphoribosyltransferase.